Consider the following 876-residue polypeptide: DNA double-strand break repair Rad50 ATPase (876 aa).

ATP-binding positions include arginine 11, 31–37 (NGAGKTT), and glutamine 139. 2 coiled-coil regions span residues 188 to 528 (RERV…EDRL) and 575 to 710 (SGVE…RKER). The region spanning 387–484 (EETLQSEYEE…RLESVRRELE (98 aa)) is the Zinc-hook domain. Zn(2+)-binding residues include cysteine 432 and cysteine 435.

Belongs to the SMC family. RAD50 subfamily. Homodimer. Forms a heterotetramer composed of two Mre11 subunits and two Rad50 subunits. The cofactor is Zn(2+).

In terms of biological role, part of the Rad50/Mre11 complex, which is involved in the early steps of DNA double-strand break (DSB) repair. The complex may facilitate opening of the processed DNA ends to aid in the recruitment of HerA and NurA. Rad50 controls the balance between DNA end bridging and DNA resection via ATP-dependent structural rearrangements of the Rad50/Mre11 complex. The protein is DNA double-strand break repair Rad50 ATPase of Methanopyrus kandleri (strain AV19 / DSM 6324 / JCM 9639 / NBRC 100938).